The chain runs to 520 residues: Acetyltransferase MAT1 (520 aa).

Catalysis depends on proton acceptor residues histidine 183 and aspartate 456.

Belongs to the plant acyltransferase family.

The protein operates within secondary metabolite biosynthesis. Acyl-CoA-dependent acyltransferase; part of the gene cluster that mediates the biosynthesis of mannosylerythritol lipids (MELs), surface-active substances that enhance the availability of water-insoluble substrates. Depending on the number of acetyl groups, mannosylerythritol lipids can be differentiated into MEL A (fully acetylated), MEL B and MEL C (monoacetylated at R-6 and R-4, respectively), and the fully deacetylated MEL D. The first step in the pathway is the generation of mannosylerythritol by the glycosyltransferase EMT1 which catalyzes the transfer of GDP-mannose to the C-4 atom of meso-erythritol. This reaction has to be stereospecific, since only mannosyl-D-erythritol is generated. The produced disaccharide is subsequently acylated with fatty acids of various lengths by the acyltransferases MAC1 and MAC2 at positions C-2 and C-3, repectively. The existence of MEL derivatives which carry an acetyl group at C-2 implies that at least MAC1 also accepts acetyl-CoA as a donor. The final step of MEL biosynthesis is the acetylation of the fully acylated mannosylerythritol lipids catalyzed by the acetyl-CoA-dependent acetyltransferase MAT1. MAT1 displays a relaxed regioselectivity and is able to transfer acetylgroups to both positions C-4 and C-6 of the mannosyl moiety. In Pseudozyma antarctica (strain T-34) (Yeast), this protein is Acetyltransferase MAT1.